A 152-amino-acid chain; its full sequence is Proteolipid protein 2 (152 aa).

The MARVEL domain maps to 19 to 137 (FSRTRKGFLL…DAYITFPLRQ (119 aa)). 3 helical membrane passes run 25–45 (GFLL…FSTS), 48–68 (GYSF…VVYM), and 85–105 (FFRT…VLVE). Asn-108 carries N-linked (GlcNAc...) asparagine glycosylation. The chain crosses the membrane as a helical span at residues 112–132 (IAAGALGLCAAGLFGYDAYIT).

Its subcellular location is the membrane. Functionally, may play a role in cell differentiation in the intestinal epithelium. The protein is Proteolipid protein 2 (PLP2) of Bos taurus (Bovine).